A 161-amino-acid polypeptide reads, in one-letter code: Protein-export protein SecB (161 aa).

Belongs to the SecB family. As to quaternary structure, homotetramer, a dimer of dimers. One homotetramer interacts with 1 SecA dimer.

Its subcellular location is the cytoplasm. Its function is as follows. One of the proteins required for the normal export of preproteins out of the cell cytoplasm. It is a molecular chaperone that binds to a subset of precursor proteins, maintaining them in a translocation-competent state. It also specifically binds to its receptor SecA. The polypeptide is Protein-export protein SecB (Pseudomonas fluorescens (strain Pf0-1)).